The primary structure comprises 390 residues: 3-ketoacyl-CoA thiolase (390 aa).

Cysteine 95 acts as the Acyl-thioester intermediate in catalysis. Catalysis depends on proton acceptor residues histidine 346 and cysteine 376.

This sequence belongs to the thiolase-like superfamily. Thiolase family. In terms of assembly, heterotetramer of two alpha chains (FadB) and two beta chains (FadA).

The protein localises to the cytoplasm. It carries out the reaction an acyl-CoA + acetyl-CoA = a 3-oxoacyl-CoA + CoA. Its pathway is lipid metabolism; fatty acid beta-oxidation. Functionally, catalyzes the final step of fatty acid oxidation in which acetyl-CoA is released and the CoA ester of a fatty acid two carbons shorter is formed. This Acinetobacter baumannii (strain ATCC 17978 / DSM 105126 / CIP 53.77 / LMG 1025 / NCDC KC755 / 5377) protein is 3-ketoacyl-CoA thiolase.